Consider the following 114-residue polypeptide: Hydrogenase maturation factor HypA (114 aa).

Position 2 (His2) interacts with Ni(2+). Cys73, Cys76, Cys89, and Cys92 together coordinate Zn(2+).

This sequence belongs to the HypA/HybF family.

Involved in the maturation of [NiFe] hydrogenases. Required for nickel insertion into the metal center of the hydrogenase. The protein is Hydrogenase maturation factor HypA of Caldanaerobacter subterraneus subsp. tengcongensis (strain DSM 15242 / JCM 11007 / NBRC 100824 / MB4) (Thermoanaerobacter tengcongensis).